The following is a 310-amino-acid chain: Acetylglutamate kinase (310 aa).

Substrate contacts are provided by residues Gly70–Gly71, Arg92, and Asn191.

Belongs to the acetylglutamate kinase family. ArgB subfamily.

The protein resides in the cytoplasm. The catalysed reaction is N-acetyl-L-glutamate + ATP = N-acetyl-L-glutamyl 5-phosphate + ADP. Its pathway is amino-acid biosynthesis; L-arginine biosynthesis; N(2)-acetyl-L-ornithine from L-glutamate: step 2/4. Its function is as follows. Catalyzes the ATP-dependent phosphorylation of N-acetyl-L-glutamate. This Corynebacterium diphtheriae (strain ATCC 700971 / NCTC 13129 / Biotype gravis) protein is Acetylglutamate kinase.